We begin with the raw amino-acid sequence, 434 residues long: Histidinol dehydrogenase (434 aa).

NAD(+) is bound by residues Y130, Q191, and N214. The substrate site is built by S237, Q259, and H262. Positions 259 and 262 each coordinate Zn(2+). Catalysis depends on proton acceptor residues E327 and H328. Positions 328, 361, 415, and 420 each coordinate substrate. D361 provides a ligand contact to Zn(2+). H420 provides a ligand contact to Zn(2+).

Belongs to the histidinol dehydrogenase family. It depends on Zn(2+) as a cofactor.

It carries out the reaction L-histidinol + 2 NAD(+) + H2O = L-histidine + 2 NADH + 3 H(+). Its pathway is amino-acid biosynthesis; L-histidine biosynthesis; L-histidine from 5-phospho-alpha-D-ribose 1-diphosphate: step 9/9. Catalyzes the sequential NAD-dependent oxidations of L-histidinol to L-histidinaldehyde and then to L-histidine. In Chromobacterium violaceum (strain ATCC 12472 / DSM 30191 / JCM 1249 / CCUG 213 / NBRC 12614 / NCIMB 9131 / NCTC 9757 / MK), this protein is Histidinol dehydrogenase.